Reading from the N-terminus, the 358-residue chain is Heat-inducible transcription repressor HrcA (358 aa).

Belongs to the HrcA family.

Its function is as follows. Negative regulator of class I heat shock genes (grpE-dnaK-dnaJ and groELS operons). Prevents heat-shock induction of these operons. The sequence is that of Heat-inducible transcription repressor HrcA from Caulobacter vibrioides (strain NA1000 / CB15N) (Caulobacter crescentus).